Reading from the N-terminus, the 968-residue chain is RNA polymerase-associated protein RapA (968 aa).

The Helicase ATP-binding domain occupies 164-334 (DVGRRHAPRV…FARLRLLDPN (171 aa)). Residue 177-184 (DEVGLGKT) coordinates ATP. The DEAH box signature appears at 280-283 (DEAH). Positions 490-662 (RVEWLMGYLT…YLASPDQTEG (173 aa)) constitute a Helicase C-terminal domain.

This sequence belongs to the SNF2/RAD54 helicase family. RapA subfamily. Interacts with the RNAP. Has a higher affinity for the core RNAP than for the holoenzyme. Its ATPase activity is stimulated by binding to RNAP.

In terms of biological role, transcription regulator that activates transcription by stimulating RNA polymerase (RNAP) recycling in case of stress conditions such as supercoiled DNA or high salt concentrations. Probably acts by releasing the RNAP, when it is trapped or immobilized on tightly supercoiled DNA. Does not activate transcription on linear DNA. Probably not involved in DNA repair. The protein is RNA polymerase-associated protein RapA of Shigella boydii serotype 4 (strain Sb227).